The following is a 146-amino-acid chain: Hemoglobin subunit beta (146 aa).

Val1 is subject to N-acetylvaline. Positions 2 to 146 (HMTDAEKKLV…VANALAHKYH (145 aa)) constitute a Globin domain. Phosphothreonine is present on Thr12. An N6-acetyllysine modification is found at Lys59. A heme b-binding site is contributed by His63. At Lys82 the chain carries N6-acetyllysine. Residue His92 coordinates heme b. Residue Cys93 is modified to S-nitrosocysteine. Lys144 bears the N6-acetyllysine mark.

Belongs to the globin family. Tetramer of two alpha and two different beta chains. Two external cysteine residues at beta-16 and beta-52 cause reversible polymerization to octamers and most likely irreversible formation of higher polymers. Red blood cells.

Functionally, involved in oxygen transport from the lung to the various peripheral tissues. This is Hemoglobin subunit beta (HBB) from Echinops telfairi (Lesser hedgehog tenrec).